The following is a 274-amino-acid chain: Orotidine 5'-phosphate decarboxylase (274 aa).

Substrate-binding positions include Asp40, Lys62–His64, Asp93–Thr102, Tyr227, and Arg245. Lys95 (proton donor) is an active-site residue.

Belongs to the OMP decarboxylase family.

The catalysed reaction is orotidine 5'-phosphate + H(+) = UMP + CO2. It participates in pyrimidine metabolism; UMP biosynthesis via de novo pathway; UMP from orotate: step 2/2. The polypeptide is Orotidine 5'-phosphate decarboxylase (URA3) (Coccidioides immitis (strain RS) (Valley fever fungus)).